Here is a 277-residue protein sequence, read N- to C-terminus: Ribosomal RNA small subunit methyltransferase A (277 aa).

S-adenosyl-L-methionine contacts are provided by asparagine 23, leucine 25, glycine 50, glutamate 75, aspartate 98, and asparagine 121.

It belongs to the class I-like SAM-binding methyltransferase superfamily. rRNA adenine N(6)-methyltransferase family. RsmA subfamily.

The protein localises to the cytoplasm. The catalysed reaction is adenosine(1518)/adenosine(1519) in 16S rRNA + 4 S-adenosyl-L-methionine = N(6)-dimethyladenosine(1518)/N(6)-dimethyladenosine(1519) in 16S rRNA + 4 S-adenosyl-L-homocysteine + 4 H(+). Its function is as follows. Specifically dimethylates two adjacent adenosines (A1518 and A1519) in the loop of a conserved hairpin near the 3'-end of 16S rRNA in the 30S particle. May play a critical role in biogenesis of 30S subunits. This is Ribosomal RNA small subunit methyltransferase A from Paraburkholderia xenovorans (strain LB400).